A 77-amino-acid chain; its full sequence is Putative defensin-like protein 60 (77 aa).

An N-terminal signal peptide occupies residues 1–25 (MKMNITKSYVILFLVVVMTNSLSNS). 4 disulfide bridges follow: Cys41/Cys75, Cys45/Cys68, Cys54/Cys73, and Cys58/Cys74.

Belongs to the DEFL family.

It is found in the secreted. This Arabidopsis thaliana (Mouse-ear cress) protein is Putative defensin-like protein 60.